The sequence spans 147 residues: Cyanate hydratase (147 aa).

Residues R88, E91, and S114 contribute to the active site.

The protein belongs to the cyanase family.

It catalyses the reaction cyanate + hydrogencarbonate + 3 H(+) = NH4(+) + 2 CO2. Catalyzes the reaction of cyanate with bicarbonate to produce ammonia and carbon dioxide. This chain is Cyanate hydratase, found in Polynucleobacter asymbioticus (strain DSM 18221 / CIP 109841 / QLW-P1DMWA-1) (Polynucleobacter necessarius subsp. asymbioticus).